Consider the following 154-residue polypeptide: Major allergen Dau c 1 (154 aa).

It belongs to the BetVI family. In terms of assembly, homodimer.

The sequence is that of Major allergen Dau c 1 from Daucus carota (Wild carrot).